A 487-amino-acid polypeptide reads, in one-letter code: N-succinylglutamate 5-semialdehyde dehydrogenase (487 aa).

Residue 221 to 226 (GSSDTG) coordinates NAD(+). Residues glutamate 244 and cysteine 278 contribute to the active site.

The protein belongs to the aldehyde dehydrogenase family. AstD subfamily.

The enzyme catalyses N-succinyl-L-glutamate 5-semialdehyde + NAD(+) + H2O = N-succinyl-L-glutamate + NADH + 2 H(+). The protein operates within amino-acid degradation; L-arginine degradation via AST pathway; L-glutamate and succinate from L-arginine: step 4/5. Functionally, catalyzes the NAD-dependent reduction of succinylglutamate semialdehyde into succinylglutamate. The polypeptide is N-succinylglutamate 5-semialdehyde dehydrogenase (Burkholderia ambifaria (strain ATCC BAA-244 / DSM 16087 / CCUG 44356 / LMG 19182 / AMMD) (Burkholderia cepacia (strain AMMD))).